Consider the following 92-residue polypeptide: Defensin Lucifensin (92 aa).

An N-terminal signal peptide occupies residues 1-23 (MKFFMVFAVTFCLALSFVSQSLA). The propeptide occupies 24-52 (LPADDEAHFVDGLEALKTIEPELHGRYKR). 3 cysteine pairs are disulfide-bonded: C55-C82, C68-C88, and C72-C90.

Belongs to the invertebrate defensin family. Type 1 subfamily. Post-translationally, the disulfide bonds are essential for antimicrobial activity. As to expression, larval fat body, hemolymph and salivary glands (at protein level). Expressed in the salivary glands of all larval stages.

It localises to the secreted. It is found in the host cell membrane. Functionally, shows strong antibacterial activity against numerous Gram-positive bacteria. It selectively inhibits peptidoglycan biosynthesis through complex formation with the cell wall precursor lipid II (1:1 molar ratio) thus inhibiting cell wall synthesis. Shows antibacterial activity against the Gram-positive bacteria M.luteus, E.fecalis (MIC=32 mg/L), S.aureus (MIC=16 mg/L), S.carnosus (MIC=2 mg/L), S.pneumoniae (MIC=2 mg/L) and S.pyogenes (MIC=2 mg/L) and against a number of methicillin-resistant S.aureus and glycopeptide-intermediate S.aureus isolates. Does not show antibacterial activity against Gram-negative bacteria or antifungal activity against C.utilis. Shows slight antifungal activity against C.albicans. This Lucilia sericata (Green bottle fly) protein is Defensin Lucifensin.